Reading from the N-terminus, the 64-residue chain is Beta-defensin 2 (64 aa).

The N-terminal stretch at Met1–Thr22 is a signal peptide. 3 disulfide bridges follow: Cys31-Cys60, Cys38-Cys53, and Cys43-Cys61.

The protein belongs to the beta-defensin family.

It is found in the secreted. In terms of biological role, has bactericidal activity. The sequence is that of Beta-defensin 2 (DEFB2) from Ovis aries (Sheep).